The primary structure comprises 269 residues: MELWTEARALKASLRGESTISLKHHQVIVSEDLSRTSSLPEDFSVECFLDFSEGQKEEEEEVVSVSSSQEQEEQEHDCVFSSQPCIFDQLPSLPDEDVEELEWVSRVVDDCSSPEVSLLLTQTHKTKPSFSRIPVKPRTKRSRNSLTGSRVWPLVSTNHQHAATEQLRKKKQETVLVFQRRCSHCGTNNTPQWRTGPVGPKTLCNACGVRFKSGRLCPEYRPADSPTFSNEIHSNLHRKVLELRKSKELGEETGEASTKSDPVKFGSKW.

The Nuclear localization signal motif lies at 136-143 (KPRTKRSR). The segment at 176 to 230 (LVFQRRCSHCGTNNTPQWRTGPVGPKTLCNACGVRFKSGRLCPEYRPADSPTFSN) adopts a GATA-type zinc-finger fold. A disordered region spans residues 245–269 (KSKELGEETGEASTKSDPVKFGSKW).

It belongs to the type IV zinc-finger family. Class A subfamily. As to expression, mostly expressed in roots. Also expressed in stems, flowers and leaves.

Its subcellular location is the nucleus. Transcriptional activator that specifically binds 5'-GATA-3' or 5'-GAT-3' motifs within gene promoters. May be involved in the regulation of some light-responsive genes. The chain is GATA transcription factor 3 (GATA3) from Arabidopsis thaliana (Mouse-ear cress).